The following is a 153-amino-acid chain: Protein SprT-like (153 aa).

The 139-residue stretch at 7–145 (QTLVEKISIV…VCGKCHGRLS (139 aa)) folds into the SprT-like domain. H67 provides a ligand contact to Zn(2+). Residue E68 is part of the active site. Residue H71 coordinates Zn(2+).

Belongs to the SprT family. Zn(2+) is required as a cofactor.

The protein localises to the cytoplasm. This is Protein SprT-like from Enterococcus faecalis (strain ATCC 700802 / V583).